The following is a 206-amino-acid chain: Heat shock protein beta-1 (206 aa).

An Omega-N-methylarginine modification is found at arginine 12. The residue at position 13 (serine 13) is a Phosphoserine. Residue serine 15 is modified to Phosphoserine; by MAPKAPK2 and MAPKAPK3. Residue serine 27 is modified to Phosphoserine. The segment at 74–206 (RPAFSRALNR…GPESEQSGAK (133 aa)) is interaction with TGFB1I1. The region spanning 80–188 (ALNRQLSSGV…QSAEITIPVT (109 aa)) is the sHSP domain. Serine 86 carries the phosphoserine; by MAPKAPK2, MAPKAPK3 and MAPKAPK5 modification. Serine 87, serine 90, and serine 102 each carry phosphoserine. Residue lysine 127 is modified to N6-acetyllysine. Threonine 178 is modified (phosphothreonine). A phosphoserine mark is found at serine 180 and serine 200.

The protein belongs to the small heat shock protein (HSP20) family. As to quaternary structure, homooligomer. Homodimer; becomes monomeric upon activation. Heterooligomer; with HSPB6. Associates with alpha- and beta-tubulin. Interacts with TGFB1I1. Interacts with CRYAB. Interacts with HSPB8. Interacts with HSPBAP1. In terms of processing, phosphorylated upon exposure to protein kinase C activators and heat shock. Phosphorylation by MAPKAPK2 and MAPKAPK3 in response to stress dissociates HSPB1 from large small heat-shock protein (sHsps) oligomers and impairs its chaperone activity and ability to protect against oxidative stress effectively. Phosphorylation by MAPKAPK5 in response to PKA stimulation induces F-actin rearrangement. As to expression, expressed in a variety of tissues. High levels in lung, adrenal, xiphoid, adipose tissue, heart and striated and smooth muscle, lower levels in the CNS. Adult levels are much higher in the slow-twitch soleus muscle than in the fast-twitch rectus femoris and extensor digitorum muscles.

The protein localises to the cytoplasm. It localises to the nucleus. The protein resides in the cytoskeleton. Its subcellular location is the spindle. Its function is as follows. Small heat shock protein which functions as a molecular chaperone probably maintaining denatured proteins in a folding-competent state. Plays a role in stress resistance and actin organization. Through its molecular chaperone activity may regulate numerous biological processes including the phosphorylation and the axonal transport of neurofilament proteins. In Rattus norvegicus (Rat), this protein is Heat shock protein beta-1 (Hspb1).